We begin with the raw amino-acid sequence, 351 residues long: Transcription factor bHLH93 (351 aa).

The 50-residue stretch at 174 to 223 (GQPSKNLMAERRRRKRLNDRLSMLRSIVPKISKMDRTSILGDAIDYMKEL) folds into the bHLH domain.

Homodimer. Interacts with FAMA. Broadly expressed.

The protein localises to the nucleus. Its function is as follows. Transcription factor. May be involved in the differentiation of stomatal guard cells. The chain is Transcription factor bHLH93 (BHLH93) from Arabidopsis thaliana (Mouse-ear cress).